Here is a 465-residue protein sequence, read N- to C-terminus: E3 ubiquitin-protein ligase TRIM38 (465 aa).

An RING-type zinc finger spans residues 16 to 63 (CSICLSLMTNPVSINCGHSYCHLCITDFFKNPSQKQLRQETFCCPQCR). Serine 70 is modified (phosphoserine). The B box-type zinc finger occupies 88–129 (DQEMSCEEHGEQFHLFCEDEGQLICWRCERAPQHKGHTTALV). Residues cysteine 93, histidine 96, cysteine 115, and histidine 121 each coordinate Zn(2+). A B30.2/SPRY domain is found at 274–465 (CNVSKLYFDV…SPLFLPPPGD (192 aa)).

In terms of assembly, interacts (via B30.2/SPRY domain) with TAB2 and TAB3. In terms of tissue distribution, ubiquitous.

It is found in the cytoplasm. The enzyme catalyses S-ubiquitinyl-[E2 ubiquitin-conjugating enzyme]-L-cysteine + [acceptor protein]-L-lysine = [E2 ubiquitin-conjugating enzyme]-L-cysteine + N(6)-ubiquitinyl-[acceptor protein]-L-lysine.. It functions in the pathway protein modification; protein ubiquitination. Its pathway is protein modification; protein sumoylation. In terms of biological role, E3 ubiquitin-protein and E3 SUMO-protein ligase that acts as a regulator of innate immunity. Acts as a negative regulator of type I interferon IFN-beta production by catalyzing 'Lys-48'-linked polyubiquitination of AZI2/NAP1, leading to its degradation. Mediates 'Lys-48'-linked polyubiquitination and proteasomal degradation of the critical TLR adapter TICAM1, inhibiting TLR3-mediated type I interferon signaling. Acts as positive regulator of the cGAS-STING pathway by acting as a E3 SUMO-protein ligase: mediates sumoylation of CGAS and STING, preventing their degradation and thereby activating the innate immune response to DNA virus. Also acts as a negative regulator of NF-kappa-B signaling independently of its E3 protein ligase activity by promoting lysosome-dependent degradation of TAB2 and TAB3 adapters. The polypeptide is E3 ubiquitin-protein ligase TRIM38 (Homo sapiens (Human)).